Here is a 493-residue protein sequence, read N- to C-terminus: Cobyric acid synthase (493 aa).

The region spanning 246 to 440 is the GATase cobBQ-type domain; sequence PIDIAVIKMP…IHGVFDGVSF (195 aa). The active-site Nucleophile is Cys326. His432 is an active-site residue.

The protein belongs to the CobB/CobQ family. CobQ subfamily.

It participates in cofactor biosynthesis; adenosylcobalamin biosynthesis. Catalyzes amidations at positions B, D, E, and G on adenosylcobyrinic A,C-diamide. NH(2) groups are provided by glutamine, and one molecule of ATP is hydrogenolyzed for each amidation. The sequence is that of Cobyric acid synthase from Clostridium botulinum (strain Langeland / NCTC 10281 / Type F).